Here is a 232-residue protein sequence, read N- to C-terminus: Large ribosomal subunit protein uL1 (232 aa).

This sequence belongs to the universal ribosomal protein uL1 family. In terms of assembly, part of the 50S ribosomal subunit.

Functionally, binds directly to 23S rRNA. The L1 stalk is quite mobile in the ribosome, and is involved in E site tRNA release. Its function is as follows. Protein L1 is also a translational repressor protein, it controls the translation of the L11 operon by binding to its mRNA. The protein is Large ribosomal subunit protein uL1 of Bartonella henselae (strain ATCC 49882 / DSM 28221 / CCUG 30454 / Houston 1) (Rochalimaea henselae).